A 195-amino-acid chain; its full sequence is uncharacterized protein (195 aa).

The region spanning 10–70 (EETVARLLQA…ATAYEVLRRQ (61 aa)) is the HTH tetR-type domain. The H-T-H motif DNA-binding region spans 33–52 (SAAVITKRAGVSVGALFRHF).

This is an uncharacterized protein from Mycobacterium tuberculosis (strain CDC 1551 / Oshkosh).